Reading from the N-terminus, the 185-residue chain is Small ribosomal subunit protein bS6 (185 aa).

Residues 115–141 are compositionally biased toward basic and acidic residues; sequence AAQKAAAEKAEAARLEAEKAAEEEAAK. A disordered region spans residues 115-185; it reads AAQKAAAEKA…EEPKSDEEDA (71 aa). Positions 142-169 are enriched in low complexity; the sequence is AAEAQAKEAPAAEAPAEEAPAAEAPAEA. A compositionally biased stretch (acidic residues) spans 170–185; sequence PAEEPAEEPKSDEEDA.

It belongs to the bacterial ribosomal protein bS6 family.

Functionally, binds together with bS18 to 16S ribosomal RNA. This Desulfatibacillum aliphaticivorans protein is Small ribosomal subunit protein bS6.